We begin with the raw amino-acid sequence, 159 residues long: Cystatin-9 (159 aa).

A signal peptide spans 1–28 (MSSPQRRKAMPWALSLLLMGFQLLVTYA).

The protein belongs to the cystatin family. Expressed in heart, placenta, lung, liver, skeletal muscle and pancreas. Not expressed in brain. Expressed in epididymis, kidney, testis, spinal cord, and thymus with a strong expression in epididymis and kidney and a weak expression in the spinal cord and thymus.

The protein localises to the secreted. May be involved in testis development. May play a role in hematopoietic differentiation or inflammation. Has immunomodulatory and antimicrobial functions against Francisella tularensis, a Gram-negative bacteria. This Homo sapiens (Human) protein is Cystatin-9 (CST9).